Consider the following 435-residue polypeptide: Eukaryotic translation initiation factor 3 subunit E (435 aa).

Residues 219–392 (FFNHAKGRDL…GHVVMGTQPL (174 aa)) form the PCI domain.

This sequence belongs to the eIF-3 subunit E family. Component of the eukaryotic translation initiation factor 3 (eIF-3) complex.

The protein resides in the cytoplasm. Functionally, component of the eukaryotic translation initiation factor 3 (eIF-3) complex, which is involved in protein synthesis of a specialized repertoire of mRNAs and, together with other initiation factors, stimulates binding of mRNA and methionyl-tRNAi to the 40S ribosome. The eIF-3 complex specifically targets and initiates translation of a subset of mRNAs involved in cell proliferation. In Culex quinquefasciatus (Southern house mosquito), this protein is Eukaryotic translation initiation factor 3 subunit E (eIF3-S6).